The following is a 559-amino-acid chain: Inositol-3-phosphate synthase 1 (559 aa).

NAD(+) is bound by residues Gly67, Gly68, Asn69, Asn70, Asp141, Ser177, Val178, Gln188, Arg191, Thr228, Ala229, Asn230, Thr231, Gly278, Ser279, Asp303, Ser306, Asn337, Asn338, Asp339, and Lys352. Ser279 bears the Phosphoserine mark. Ser357 carries the phosphoserine modification. Positions 390, 391, 419, and 420 each coordinate NAD(+).

It belongs to the myo-inositol 1-phosphate synthase family. It depends on NAD(+) as a cofactor.

It localises to the cytoplasm. It carries out the reaction D-glucose 6-phosphate = 1D-myo-inositol 3-phosphate. It participates in polyol metabolism; myo-inositol biosynthesis; myo-inositol from D-glucose 6-phosphate: step 1/2. In terms of biological role, key enzyme in myo-inositol biosynthesis pathway that catalyzes the conversion of glucose 6-phosphate to 1-myo-inositol 1-phosphate in a NAD-dependent manner. Rate-limiting enzyme in the synthesis of all inositol-containing compounds. This Macaca fascicularis (Crab-eating macaque) protein is Inositol-3-phosphate synthase 1 (ISYNA1).